Here is a 251-residue protein sequence, read N- to C-terminus: Ubiquinone/menaquinone biosynthesis C-methyltransferase UbiE (251 aa).

S-adenosyl-L-methionine-binding positions include Thr74, Asp95, and 123 to 124; that span reads NA.

The protein belongs to the class I-like SAM-binding methyltransferase superfamily. MenG/UbiE family.

The enzyme catalyses a 2-demethylmenaquinol + S-adenosyl-L-methionine = a menaquinol + S-adenosyl-L-homocysteine + H(+). The catalysed reaction is a 2-methoxy-6-(all-trans-polyprenyl)benzene-1,4-diol + S-adenosyl-L-methionine = a 5-methoxy-2-methyl-3-(all-trans-polyprenyl)benzene-1,4-diol + S-adenosyl-L-homocysteine + H(+). It functions in the pathway quinol/quinone metabolism; menaquinone biosynthesis; menaquinol from 1,4-dihydroxy-2-naphthoate: step 2/2. Its pathway is cofactor biosynthesis; ubiquinone biosynthesis. In terms of biological role, methyltransferase required for the conversion of demethylmenaquinol (DMKH2) to menaquinol (MKH2) and the conversion of 2-polyprenyl-6-methoxy-1,4-benzoquinol (DDMQH2) to 2-polyprenyl-3-methyl-6-methoxy-1,4-benzoquinol (DMQH2). The polypeptide is Ubiquinone/menaquinone biosynthesis C-methyltransferase UbiE (Pseudoalteromonas translucida (strain TAC 125)).